A 412-amino-acid chain; its full sequence is Protein BTN1 (412 aa).

The first 29 residues, Met-1–Ala-29, serve as a signal peptide directing secretion. Helical transmembrane passes span Leu-41–Ile-61, Ile-70–Gly-90, Val-91–Leu-111, Gly-131–Val-151, Ser-154–Glu-174, Val-234–Asn-254, Ile-281–Gly-300, Gly-307–Tyr-329, and Val-334–Phe-356.

This sequence belongs to the battenin family.

The protein localises to the vacuole membrane. Functionally, involved in vacuolar transport and vacuole pH homeostasis. Also required for cytokinesis. This is Protein BTN1 (BTN1) from Eremothecium gossypii (strain ATCC 10895 / CBS 109.51 / FGSC 9923 / NRRL Y-1056) (Yeast).